Here is a 302-residue protein sequence, read N- to C-terminus: MASHLSIRSLSGSSRYLARNKALKFTDLKSIKLREPIVPTHKNFDVSPDHPLWAFFPDGNKSETCFRETVDLDIQSRPWGLPELRRKSFEDLHKLWYLILKERNILAREVRLADSFNERSTHAHNDLDDKLTLTQKRIKQALIERQVAYERVQTFTDNQKEYLSDFEESYINADSSEIVSFNEKLVRLQYAFFGIQPQLEDYNLEEDINVKFVEGLSYVANLKLKRYLSQNPQSTEEFQTPLNGVVEELPFLLRDTEEAIEEVQELRNSGANVVLHKIEVFPFLRNALGKTIQEAYASDEQL.

Belongs to the universal ribosomal protein uL29 family. In terms of assembly, component of the mitochondrial large ribosomal subunit. Mature mitochondrial ribosomes consist of a small (37S) and a large (54S) subunit. The 37S subunit contains at least 33 different proteins and 1 molecule of RNA (15S). The 54S subunit contains at least 45 different proteins and 1 molecule of RNA (21S).

The protein localises to the mitochondrion. The chain is Large ribosomal subunit protein uL29m (MRPL4) from Debaryomyces hansenii (strain ATCC 36239 / CBS 767 / BCRC 21394 / JCM 1990 / NBRC 0083 / IGC 2968) (Yeast).